A 243-amino-acid chain; its full sequence is Phosphate-specific transport system accessory protein PhoU (243 aa).

It belongs to the PhoU family. As to quaternary structure, homodimer.

It is found in the cytoplasm. Part of the phosphate (Pho) regulon, which plays a key role in phosphate homeostasis. Encoded together with proteins of the phosphate-specific transport (Pst) system in the polycistronic pstSCAB-phoU operon. PhoU is essential for the repression of the Pho regulon at high phosphate conditions. In this role, it may bind, possibly as a chaperone, to PhoR, PhoB or a PhoR-PhoB complex to promote dephosphorylation of phospho-PhoB, or inhibit formation of the PhoR-PhoB transitory complex. In Serratia marcescens, this protein is Phosphate-specific transport system accessory protein PhoU.